The primary structure comprises 453 residues: Ribosomal protein uS12 methylthiotransferase RimO (453 aa).

The region spanning 9 to 124 is the MTTase N-terminal domain; the sequence is PKIGFVSLGC…VMDAVHKHMP (116 aa). [4Fe-4S] cluster-binding residues include Cys18, Cys54, Cys83, Cys155, Cys159, and Cys162. One can recognise a Radical SAM core domain in the interval 141-382; sequence LTPKHFAYLK…MLLQEEISKK (242 aa). One can recognise a TRAM domain in the interval 385 to 453; sequence QAKVGKTMRV…ADAHDLWAEA (69 aa).

This sequence belongs to the methylthiotransferase family. RimO subfamily. The cofactor is [4Fe-4S] cluster.

The protein localises to the cytoplasm. The enzyme catalyses L-aspartate(89)-[ribosomal protein uS12]-hydrogen + (sulfur carrier)-SH + AH2 + 2 S-adenosyl-L-methionine = 3-methylsulfanyl-L-aspartate(89)-[ribosomal protein uS12]-hydrogen + (sulfur carrier)-H + 5'-deoxyadenosine + L-methionine + A + S-adenosyl-L-homocysteine + 2 H(+). Its function is as follows. Catalyzes the methylthiolation of an aspartic acid residue of ribosomal protein uS12. This Janthinobacterium sp. (strain Marseille) (Minibacterium massiliensis) protein is Ribosomal protein uS12 methylthiotransferase RimO.